The primary structure comprises 173 residues: MAEKRNIFLVGPMGAGKSTIGRQLAQQLNMEFYDSDQEIEKRTGADVGWVFDLEGEDGFRDREEKVINELTEKQGIVLATGGGSVKSRETRNRLSARGVVVYLETTIEKQLARTQRDKKRPLLQVEAPPREVLEALANERNPLYEEIADVTIRTDDQSAKVVANQIIHMLESN.

14–19 (GAGKST) lines the ATP pocket. Residue S18 coordinates Mg(2+). D36, R60, and G82 together coordinate substrate. R120 provides a ligand contact to ATP. R140 is a substrate binding site. Q157 is a binding site for ATP.

The protein belongs to the shikimate kinase family. Monomer. It depends on Mg(2+) as a cofactor.

It localises to the cytoplasm. It carries out the reaction shikimate + ATP = 3-phosphoshikimate + ADP + H(+). It functions in the pathway metabolic intermediate biosynthesis; chorismate biosynthesis; chorismate from D-erythrose 4-phosphate and phosphoenolpyruvate: step 5/7. Functionally, catalyzes the specific phosphorylation of the 3-hydroxyl group of shikimic acid using ATP as a cosubstrate. In Escherichia fergusonii (strain ATCC 35469 / DSM 13698 / CCUG 18766 / IAM 14443 / JCM 21226 / LMG 7866 / NBRC 102419 / NCTC 12128 / CDC 0568-73), this protein is Shikimate kinase 1.